The sequence spans 141 residues: D-aminoacyl-tRNA deacylase (141 aa).

The short motif at 133-134 (GP) is the Gly-cisPro motif, important for rejection of L-amino acids element.

It belongs to the DTD family. In terms of assembly, homodimer.

Its subcellular location is the cytoplasm. It catalyses the reaction glycyl-tRNA(Ala) + H2O = tRNA(Ala) + glycine + H(+). The enzyme catalyses a D-aminoacyl-tRNA + H2O = a tRNA + a D-alpha-amino acid + H(+). In terms of biological role, an aminoacyl-tRNA editing enzyme that deacylates mischarged D-aminoacyl-tRNAs. Also deacylates mischarged glycyl-tRNA(Ala), protecting cells against glycine mischarging by AlaRS. Acts via tRNA-based rather than protein-based catalysis; rejects L-amino acids rather than detecting D-amino acids in the active site. By recycling D-aminoacyl-tRNA to D-amino acids and free tRNA molecules, this enzyme counteracts the toxicity associated with the formation of D-aminoacyl-tRNA entities in vivo and helps enforce protein L-homochirality. The protein is D-aminoacyl-tRNA deacylase of Thermobifida fusca (strain YX).